A 243-amino-acid polypeptide reads, in one-letter code: Probable fructoselysine utilization operon transcriptional repressor (243 aa).

An HTH gntR-type domain is found at 10-78; it reads QLLYATVRQR…QGKGTFVQSQ (69 aa). Residues 38–57 constitute a DNA-binding region (H-T-H motif); sequence ENELCTQYNVSRITIRKAIS.

The protein operates within carbohydrate metabolism; fructoselysine degradation [regulation]. May regulate the transcription of the frlABCDR operon, involved in the utilization of fructoselysine and psicoselysine. In Shigella flexneri, this protein is Probable fructoselysine utilization operon transcriptional repressor (frlR).